The primary structure comprises 656 residues: Solute carrier family 5 member 4A (656 aa).

Residues 1–28 are Cytoplasmic-facing; the sequence is MASTASVSTSTASSELSSLSNNINNAAD. The helical transmembrane segment at 29 to 47 threads the bilayer; the sequence is ISVIVIYFVVVMAVGVWAM. The Extracellular segment spans residues 48–64; sequence LKTNRSTVGGFFLAGRS. Residues 65-85 traverse the membrane as a helical segment; the sequence is MTWWPMGASLFASNIGSGHFV. Residues 86–105 lie on the Cytoplasmic side of the membrane; it reads GLAGTGAASGIAVTAFESHS. Residues 106–126 form a helical membrane-spanning segment; it reads FALLLVLGWIFVPIYIKAGVM. The Extracellular portion of the chain corresponds to 127-171; that stretch reads TMPEYLKKRFGGKRLQIYLSILFLFICVILTISADIFSGAIFIKL. Residues 172–191 traverse the membrane as a helical segment; the sequence is ALGLNLYLAILILLAITAIF. Residues 192–208 are Cytoplasmic-facing; the sequence is TITGGLASVIYTDTVQA. The chain crosses the membrane as a helical span at residues 209–229; sequence VIMLVGSFILMVFAFVEVGGY. The Extracellular segment spans residues 230 to 270; the sequence is ESFTEKFMNAIPSVVEGDNLTINSRCYTPQPDSFHIFRDPV. A glycan (N-linked (GlcNAc...) asparagine) is linked at Asn248. A helical membrane pass occupies residues 271–291; the sequence is TGDIPWPGTAFGMPITALWYW. Topologically, residues 292–314 are cytoplasmic; sequence CINQVIVQRCLCGKNLSHVKAAC. A helical membrane pass occupies residues 315–334; that stretch reads ILCGYLKLLPLFFMVMPGMI. Topologically, residues 335-423 are extracellular; the sequence is SRILYTDMVA…RKKASERELL (89 aa). The chain crosses the membrane as a helical span at residues 424–443; sequence IAGRLFVSVLIVTSILWVPI. Residues 444 to 455 lie on the Cytoplasmic side of the membrane; that stretch reads VEVSQGGQLVHY. A helical transmembrane segment spans residues 456-476; that stretch reads TEAISSYLGPPIAAVFLVAVF. The Extracellular segment spans residues 477–526; the sequence is CKRANEQGAFWGLMVGLVMGLIRMIAEFSYGTGSCLAPSSCPKIICGVHY. A helical transmembrane segment spans residues 527 to 547; the sequence is LYFAIILFFVCILVILGVSYL. Residues 548–634 are Cytoplasmic-facing; that stretch reads TKPIPDVHLH…TDTTEKPFWR (87 aa). Residues 574 to 593 form a disordered region; that stretch reads DAEDKEENGADDRTEEDQTE. The helical transmembrane segment at 635–655 threads the bilayer; that stretch reads TVMNVNVILLLAVAAFFYGYF.

Belongs to the sodium:solute symporter (SSF) (TC 2.A.21) family. As to expression, expressed in small intestine. Expressed in kidney.

The protein localises to the cell membrane. Its activity is regulated as follows. Not inhibited by phlorizin. Its function is as follows. Does not function as sodium/D-glucose symporter. Generates D-glucose-induced depolarization in a pH-dependent manner, with activity in acidic conditions (pH 5) but not neutral conditions. The polypeptide is Solute carrier family 5 member 4A (Mus musculus (Mouse)).